A 382-amino-acid polypeptide reads, in one-letter code: Dodecanoyl-[acyl-carrier-protein] hydrolase, chloroplastic (382 aa).

Residues methionine 1 to asparagine 83 constitute a chloroplast transit peptide. Active-site residues include asparagine 283, histidine 285, and cysteine 320.

Belongs to the acyl-ACP thioesterase family.

Its subcellular location is the plastid. It localises to the chloroplast. The enzyme catalyses dodecanoyl-[ACP] + H2O = dodecanoate + holo-[ACP] + H(+). Its function is as follows. Plays an essential role in chain termination during de novo fatty acid synthesis. High thioesterase activity for myristoyl-ACP. This chain is Dodecanoyl-[acyl-carrier-protein] hydrolase, chloroplastic, found in Cinnamomum camphora (Camphor tree).